A 518-amino-acid polypeptide reads, in one-letter code: Membrane-bound lytic murein transglycosylase F (518 aa).

The N-terminal stretch at 1–21 is a signal peptide; that stretch reads MKKLKINYLFIGILALLLAVA. Residues 22–269 are non-LT domain; that stretch reads LWPSIPWFGK…RIEEKYLGHG (248 aa). The interval 270-518 is LT domain; it reads DDFDYVDTRT…SRKGSEEKQN (249 aa). Residue Glu314 is part of the active site.

It in the N-terminal section; belongs to the bacterial solute-binding protein 3 family. This sequence in the C-terminal section; belongs to the transglycosylase Slt family.

The protein resides in the cell outer membrane. It carries out the reaction Exolytic cleavage of the (1-&gt;4)-beta-glycosidic linkage between N-acetylmuramic acid (MurNAc) and N-acetylglucosamine (GlcNAc) residues in peptidoglycan, from either the reducing or the non-reducing ends of the peptidoglycan chains, with concomitant formation of a 1,6-anhydrobond in the MurNAc residue.. Murein-degrading enzyme that degrades murein glycan strands and insoluble, high-molecular weight murein sacculi, with the concomitant formation of a 1,6-anhydromuramoyl product. Lytic transglycosylases (LTs) play an integral role in the metabolism of the peptidoglycan (PG) sacculus. Their lytic action creates space within the PG sacculus to allow for its expansion as well as for the insertion of various structures such as secretion systems and flagella. The protein is Membrane-bound lytic murein transglycosylase F of Escherichia coli (strain SMS-3-5 / SECEC).